A 78-amino-acid polypeptide reads, in one-letter code: Acyl carrier protein (78 aa).

In terms of domain architecture, Carrier spans 2–77; it reads SDTAERVKKI…DAVKYIEKAT (76 aa). The residue at position 37 (serine 37) is an O-(pantetheine 4'-phosphoryl)serine.

The protein belongs to the acyl carrier protein (ACP) family. 4'-phosphopantetheine is transferred from CoA to a specific serine of apo-ACP by AcpS. This modification is essential for activity because fatty acids are bound in thioester linkage to the sulfhydryl of the prosthetic group.

The protein resides in the cytoplasm. The protein operates within lipid metabolism; fatty acid biosynthesis. Its function is as follows. Carrier of the growing fatty acid chain in fatty acid biosynthesis. The sequence is that of Acyl carrier protein from Chelativorans sp. (strain BNC1).